The chain runs to 360 residues: Fructose import permease protein FrcC (360 aa).

9 helical membrane-spanning segments follow: residues 48–68 (AAVPLIVLVLSLIAFGVILGG), 84–106 (AIVGIVGAAQTLVILTAGIDLSV), 125–145 (GFPPALSVICGLGVGALCGYI), 155–175 (LPPFIVTLGMWQIVLASNFLY), 205–225 (AVFTYGVVVMVLLVCLLWYVL), 254–274 (MLISIYTLSGLICALAGWALI), 284–304 (AGQFANIESITAVVIGGISLF), 310–330 (IMGMLFGALIVGVFSLGLRLM), and 335–355 (QWTYLLIGLLIIIAVAIDQWI).

The protein belongs to the binding-protein-dependent transport system permease family. The complex is composed of two ATP-binding proteins (FrcA), two transmembrane proteins (FrcC) and a solute-binding protein (FrcB).

The protein localises to the cell inner membrane. Its function is as follows. Part of the high-affinity ABC transporter complex FrcBCA involved in fructose uptake. Is also a high-affinity transporter for ribose and mannose. Responsible for the translocation of the substrate across the membrane. This Rhizobium meliloti (Ensifer meliloti) protein is Fructose import permease protein FrcC.